Consider the following 876-residue polypeptide: Leucine--tRNA ligase (876 aa).

The 'HIGH' region signature appears at 43–53 (PYPSGRIHMGH). The 'KMSKS' region signature appears at 632-636 (KMSKS). K635 is an ATP binding site.

This sequence belongs to the class-I aminoacyl-tRNA synthetase family.

The protein localises to the cytoplasm. The enzyme catalyses tRNA(Leu) + L-leucine + ATP = L-leucyl-tRNA(Leu) + AMP + diphosphate. This is Leucine--tRNA ligase from Rhodopseudomonas palustris (strain ATCC BAA-98 / CGA009).